The sequence spans 448 residues: F-box/FBD/LRR-repeat protein At2g04230 (448 aa).

One can recognise an F-box domain in the interval 12–64 (EDRISDLPDALLLQILSSLPTENAIATSVLSKRWRSLWTMLPKLKFDSNFNPV). LRR repeat units follow at residues 72–98 (PTMFSENVYKTLSLHKAPVLESLHLSF), 149–176 (ILKLKCAIDLDFPSRVCLKSLRKLYLDQ), 177–202 (VHFKDEESVCNLLCGCPSLQDLVVHR), 204–225 (SNADVATFTIASPSLQRLTIED), 226–251 (LRQEGGYGNGSYVINAPGLKYLNING), 271–296 (ISNVSGITNENILESLTSAKRLILHL), and 319–345 (THEREWWNLLSIMLDSSPKLQILKLTD). The region spanning 359 to 410 (KWNPPKCAPECLLFHLETFLWIGYEWQRGDEKEVATYILENARRLKKATFST) is the FBD domain.

The sequence is that of F-box/FBD/LRR-repeat protein At2g04230 from Arabidopsis thaliana (Mouse-ear cress).